The chain runs to 349 residues: Twinfilin-2 (349 aa).

Residue Ala2 is modified to N-acetylalanine. 2 consecutive ADF-H domains span residues 4–139 and 177–313; these read QTGI…KHLS and GLAF…DEVH. Residue Lys14 is modified to N6-acetyllysine. Residue Tyr309 is modified to Phosphotyrosine. The tract at residues 322-349 is disordered; that stretch reads AFAKPKGPGGKRGHKRLIRGPGENGEDS. The segment covering 330–339 has biased composition (basic residues); sequence GGKRGHKRLI. At Ser349 the chain carries Phosphoserine.

The protein belongs to the actin-binding proteins ADF family. Twinfilin subfamily. As to quaternary structure, interacts with G-actin; ADP-actin form and capping protein (CP). Isoform 2 interacts (via its N-terminal ADF-H domain) with G-actin (ADP-bound form) with significantly higher affinity than isoform 1. May also be able to interact with TWF1 and phosphoinositides, PI(4,5)P2. When bound to PI(4,5)P2, it is down-regulated. Interacts with MYO7A. Post-translationally, phosphorylated on both serine/threonine and tyrosine. Isoform 1 is ubiquitously expressed (at protein level). Isoform 2 expression is restricted to heart and skeletal muscle where it is the predominant form.

Its subcellular location is the cytoplasm. It is found in the cytoskeleton. The protein localises to the perinuclear region. The protein resides in the cell projection. It localises to the stereocilium. Functionally, actin-binding protein involved in motile and morphological processes. Inhibits actin polymerization, likely by sequestering G-actin. By capping the barbed ends of filaments, it also regulates motility. Seems to play an important role in clathrin-mediated endocytosis and distribution of endocytic organelles. May play a role in regulating the mature length of the middle and short rows of stereocilia. The sequence is that of Twinfilin-2 (Twf2) from Mus musculus (Mouse).